A 184-amino-acid polypeptide reads, in one-letter code: Chaperone protein dnaJ 72 (184 aa).

In terms of domain architecture, J spans 3–73 (DHYQVLGVTR…LKRASYNAGS (71 aa)). A helical membrane pass occupies residues 133–150 (FLLNLALAGGLYFAFTAI).

Belongs to the DnaJ family. C/III subfamily.

It is found in the membrane. Plays a continuous role in plant development probably in the structural organization of compartments. This Arabidopsis thaliana (Mouse-ear cress) protein is Chaperone protein dnaJ 72 (ATJ72).